The sequence spans 202 residues: FMN-dependent NADH:quinone oxidoreductase (202 aa).

FMN is bound by residues Ser-9, 15–17, 95–98, and 139–142; these read SAS, MYNF, and TSGG.

The protein belongs to the azoreductase type 1 family. In terms of assembly, homodimer. The cofactor is FMN.

It carries out the reaction 2 a quinone + NADH + H(+) = 2 a 1,4-benzosemiquinone + NAD(+). It catalyses the reaction N,N-dimethyl-1,4-phenylenediamine + anthranilate + 2 NAD(+) = 2-(4-dimethylaminophenyl)diazenylbenzoate + 2 NADH + 2 H(+). Its function is as follows. Quinone reductase that provides resistance to thiol-specific stress caused by electrophilic quinones. Functionally, also exhibits azoreductase activity. Catalyzes the reductive cleavage of the azo bond in aromatic azo compounds to the corresponding amines. In Pseudomonas savastanoi pv. phaseolicola (strain 1448A / Race 6) (Pseudomonas syringae pv. phaseolicola (strain 1448A / Race 6)), this protein is FMN-dependent NADH:quinone oxidoreductase.